The primary structure comprises 254 residues: Diphthine synthase (254 aa).

Residues D83, L86, 111–112 (SI), L163, and V205 each bind S-adenosyl-L-methionine.

Belongs to the diphthine synthase family. In terms of assembly, homodimer.

The catalysed reaction is 2-[(3S)-amino-3-carboxypropyl]-L-histidyl-[translation elongation factor 2] + 3 S-adenosyl-L-methionine = diphthine-[translation elongation factor 2] + 3 S-adenosyl-L-homocysteine + 3 H(+). It participates in protein modification; peptidyl-diphthamide biosynthesis. S-adenosyl-L-methionine-dependent methyltransferase that catalyzes the trimethylation of the amino group of the modified target histidine residue in translation elongation factor 2 (EF-2), to form an intermediate called diphthine. The three successive methylation reactions represent the second step of diphthamide biosynthesis. This is Diphthine synthase from Pyrobaculum aerophilum (strain ATCC 51768 / DSM 7523 / JCM 9630 / CIP 104966 / NBRC 100827 / IM2).